The sequence spans 944 residues: ATP-dependent RNA helicase DDX42 (944 aa).

A compositionally biased stretch (gly residues) spans 1–18 (MNWNKGGPGTKRGFGFGG). Disordered stretches follow at residues 1 to 119 (MNWN…LEAF), 131 to 155 (MKRLEDKDKEKKNAKGIRDDIEEED), and 182 to 203 (EYDSDGNPIAPSKKIIDPLPPI). Positions 35–52 (SHSAFGTAGSSAAFAKSG) are enriched in low complexity. Residues 70–84 (DEENAYFEDEEEDNS) show a composition bias toward acidic residues. Positions 120–157 (MAEVEDQAARDMKRLEDKDKEKKNAKGIRDDIEEEDDQ) form a coiled coil. Residues 131–149 (MKRLEDKDKEKKNAKGIRD) are compositionally biased toward basic and acidic residues. Residues 253–281 (SSFARFGFDEQLMHQIRKSEYTQPTPIQC) carry the Q motif motif. The 176-residue stretch at 284-459 (VPVAMSGRDM…RDILIDPIRV (176 aa)) folds into the Helicase ATP-binding domain. 297–304 (AKTGSGKT) serves as a coordination point for ATP. The DEAD box motif lies at 407–410 (DEAD). Residues 487 to 632 (WLTRRLVEFT…HVSKELLDLA (146 aa)) enclose the Helicase C-terminal domain. 3 disordered regions span residues 642–682 (RFKG…VMSN), 723–753 (GSSAAGASGWTSAGSLNSVPTSSAQQNAANP), and 794–944 (SANA…RWDS). Residues 723–737 (GSSAAGASGWTSAGS) are compositionally biased toward low complexity. The segment covering 738 to 752 (LNSVPTSSAQQNAAN) has biased composition (polar residues). Residues 794 to 814 (SANASAGNREGVGSAGSAPRG) are compositionally biased toward low complexity. Gly residues predominate over residues 815–824 (GSSGGGGGGI). Basic and acidic residues-rich tracts occupy residues 825 to 887 (VRER…RHFT) and 901 to 926 (NISEGRSNESRNGENRKDANSRDNKT).

Belongs to the DEAD box helicase family. DDX42 subfamily. Transient component of the SF3B subcomplex of the 17S U2 SnRNP complex.

The protein localises to the cytoplasm. It is found in the nucleus. The catalysed reaction is ATP + H2O = ADP + phosphate + H(+). Its function is as follows. ATP-dependent RNA helicase that binds to partially double-stranded RNAs (dsRNAs) in order to unwind RNA secondary structures. Unwinding is promoted in the presence of single-strand binding proteins. Also mediates RNA duplex formation thereby displacing the single-strand RNA binding protein. ATP and ADP modulate its activity: ATP binding and hydrolysis by DDX42 triggers RNA strand separation, whereas the ADP-bound form of the protein triggers annealing of complementary RNA strands. Required for assembly of the 17S U2 SnRNP complex of the spliceosome, a large ribonucleoprotein complex that removes introns from transcribed pre-mRNAs: DDX42 associates transiently with the SF3B subcomplex of the 17S U2 SnRNP complex and is released after fulfilling its role in the assembly of 17S U2 SnRNP. This Gallus gallus (Chicken) protein is ATP-dependent RNA helicase DDX42 (DDX42).